A 201-amino-acid polypeptide reads, in one-letter code: ATP-dependent dethiobiotin synthetase BioD (201 aa).

11–16 (DVGKTH) contacts ATP. T15 is a Mg(2+) binding site. The active site involves K31. Residues D40 and 93–96 (ELAG) each bind ATP. The Mg(2+) site is built by D40 and E93.

It belongs to the dethiobiotin synthetase family. In terms of assembly, homodimer. Requires Mg(2+) as cofactor.

Its subcellular location is the cytoplasm. It catalyses the reaction (7R,8S)-7,8-diammoniononanoate + CO2 + ATP = (4R,5S)-dethiobiotin + ADP + phosphate + 3 H(+). It participates in cofactor biosynthesis; biotin biosynthesis; biotin from 7,8-diaminononanoate: step 1/2. In terms of biological role, catalyzes a mechanistically unusual reaction, the ATP-dependent insertion of CO2 between the N7 and N8 nitrogen atoms of 7,8-diaminopelargonic acid (DAPA, also called 7,8-diammoniononanoate) to form a ureido ring. The sequence is that of ATP-dependent dethiobiotin synthetase BioD from Campylobacter jejuni subsp. jejuni serotype O:6 (strain 81116 / NCTC 11828).